Consider the following 59-residue polypeptide: Large ribosomal subunit protein bL32 (59 aa).

Residues 1-59 (MAVQQNRKTRSKRGMRRSHDALSAAALSTDATTGEVHRRHHVSPDGFYRGKQVVEARDE) form a disordered region. A compositionally biased stretch (basic residues) spans 7–16 (RKTRSKRGMR). Residues 21 to 33 (ALSAAALSTDATT) are compositionally biased toward low complexity.

The protein belongs to the bacterial ribosomal protein bL32 family.

This Marinobacter nauticus (strain ATCC 700491 / DSM 11845 / VT8) (Marinobacter aquaeolei) protein is Large ribosomal subunit protein bL32.